Here is a 508-residue protein sequence, read N- to C-terminus: Ribonuclease Y (508 aa).

The KH domain maps to 198–264 (TVSVINLPND…RLTIEKLITD (67 aa)). The HD domain maps to 324 to 417 (VLTHSIEVAK…VQAADAVSAS (94 aa)).

It belongs to the RNase Y family.

In terms of biological role, endoribonuclease that initiates mRNA decay. The protein is Ribonuclease Y of Fusobacterium nucleatum subsp. nucleatum (strain ATCC 25586 / DSM 15643 / BCRC 10681 / CIP 101130 / JCM 8532 / KCTC 2640 / LMG 13131 / VPI 4355).